Reading from the N-terminus, the 875-residue chain is uncharacterized protein (875 aa).

The tract at residues 83-149 is disordered; sequence PFQPPPPQPF…QPPQPPPQQL (67 aa). The segment covering 101 to 147 has biased composition (pro residues); it reads QQPPQPPPDQPQQPQPPQQPPQQPPQQQPQPPQPPQQPPQPPQPPPQ.

This is an uncharacterized protein from Orgyia pseudotsugata multicapsid polyhedrosis virus (OpMNPV).